The following is a 118-amino-acid chain: UPF0342 protein LCK_01004 (118 aa).

It belongs to the UPF0342 family.

This Leuconostoc citreum (strain KM20) protein is UPF0342 protein LCK_01004.